The primary structure comprises 208 residues: Uracil phosphoribosyltransferase (208 aa).

5-phospho-alpha-D-ribose 1-diphosphate contacts are provided by residues Arg-78, Arg-103, and 130–138; that span reads DPMLATANS. Uracil-binding positions include Ile-193 and 198-200; that span reads GDA. 5-phospho-alpha-D-ribose 1-diphosphate is bound at residue Asp-199.

This sequence belongs to the UPRTase family. Requires Mg(2+) as cofactor.

It catalyses the reaction UMP + diphosphate = 5-phospho-alpha-D-ribose 1-diphosphate + uracil. The protein operates within pyrimidine metabolism; UMP biosynthesis via salvage pathway; UMP from uracil: step 1/1. Its activity is regulated as follows. Allosterically activated by GTP. Catalyzes the conversion of uracil and 5-phospho-alpha-D-ribose 1-diphosphate (PRPP) to UMP and diphosphate. This chain is Uracil phosphoribosyltransferase, found in Brucella abortus biovar 1 (strain 9-941).